The following is a 282-amino-acid chain: 4-diphosphocytidyl-2-C-methyl-D-erythritol kinase (282 aa).

Lysine 11 is an active-site residue. 95–105 (PMGGGVGGGSS) provides a ligand contact to ATP. Residue aspartate 137 is part of the active site.

It belongs to the GHMP kinase family. IspE subfamily.

It carries out the reaction 4-CDP-2-C-methyl-D-erythritol + ATP = 4-CDP-2-C-methyl-D-erythritol 2-phosphate + ADP + H(+). It functions in the pathway isoprenoid biosynthesis; isopentenyl diphosphate biosynthesis via DXP pathway; isopentenyl diphosphate from 1-deoxy-D-xylulose 5-phosphate: step 3/6. In terms of biological role, catalyzes the phosphorylation of the position 2 hydroxy group of 4-diphosphocytidyl-2C-methyl-D-erythritol. The sequence is that of 4-diphosphocytidyl-2-C-methyl-D-erythritol kinase from Haemophilus ducreyi (strain 35000HP / ATCC 700724).